A 267-amino-acid polypeptide reads, in one-letter code: uncharacterized protein (267 aa).

A helical transmembrane segment spans residues 30-52 (FMRIFLLFLFFVLFTFGVEGYVI).

The protein resides in the membrane. This is an uncharacterized protein from Aquifex aeolicus (strain VF5).